Reading from the N-terminus, the 140-residue chain is Putative pre-16S rRNA nuclease (140 aa).

It belongs to the YqgF nuclease family.

It is found in the cytoplasm. Functionally, could be a nuclease involved in processing of the 5'-end of pre-16S rRNA. The sequence is that of Putative pre-16S rRNA nuclease from Enterococcus faecalis (strain ATCC 700802 / V583).